The following is a 197-amino-acid chain: MQKVVLATGNAGKVRELASLLSDFGLDVVAQTKLGVDSAEETGLTFIENAILKARHAAKMTGLPAIADDSGLAVDVLGGAPGIYSARYSGENATDQQNLEKLLHTLRDVPDDKRQARFHCVLVYLRHAEDPTPIVCHGSWPGVITRQAAGNGGFGYDPIFFVPSEGKTAAELTREEKSAISHRGQALKLLLDALRNG.

A substrate-binding site is contributed by 8 to 13 (TGNAGK). Residues E40 and D69 each contribute to the Mg(2+) site. D69 functions as the Proton acceptor in the catalytic mechanism. Residues S70, 154–157 (FGYD), K177, and 182–183 (HR) contribute to the substrate site.

This sequence belongs to the HAM1 NTPase family. Homodimer. Mg(2+) is required as a cofactor.

It catalyses the reaction XTP + H2O = XMP + diphosphate + H(+). The enzyme catalyses dITP + H2O = dIMP + diphosphate + H(+). The catalysed reaction is ITP + H2O = IMP + diphosphate + H(+). Pyrophosphatase that catalyzes the hydrolysis of nucleoside triphosphates to their monophosphate derivatives, with a high preference for the non-canonical purine nucleotides XTP (xanthosine triphosphate), dITP (deoxyinosine triphosphate) and ITP. Seems to function as a house-cleaning enzyme that removes non-canonical purine nucleotides from the nucleotide pool, thus preventing their incorporation into DNA/RNA and avoiding chromosomal lesions. The chain is dITP/XTP pyrophosphatase (rdgB) from Salmonella typhi.